The primary structure comprises 259 residues: UPF0246 protein NMCC_0856 (259 aa).

This sequence belongs to the UPF0246 family.

This is UPF0246 protein NMCC_0856 from Neisseria meningitidis serogroup C (strain 053442).